The sequence spans 659 residues: Exocyst complex component 5 (659 aa).

The stretch at 1–58 (MRFEEEIGSLQMLCDQFQNKINTLEKQMNEEKKDYVQKLHRLHEKNGEAIDKMKQLDH) forms a coiled coil.

The protein belongs to the SEC10 family. The exocyst complex is composed of sec-3/exoc1, sec-5/exoc2, sec-6/exoc3, sec-8/exoc4, sec-10/exoc5, sec-15/exoc6, exo-70/exoc7 and exo-84/exoc8.

Functionally, component of the exocyst complex involved in the docking of exocytic vesicles with fusion sites on the plasma membrane. The protein is Exocyst complex component 5 (sec-10) of Caenorhabditis elegans.